Consider the following 102-residue polypeptide: Small ribosomal subunit protein uS10 (102 aa).

It belongs to the universal ribosomal protein uS10 family. Part of the 30S ribosomal subunit.

In terms of biological role, involved in the binding of tRNA to the ribosomes. The polypeptide is Small ribosomal subunit protein uS10 (Lactobacillus helveticus (strain DPC 4571)).